We begin with the raw amino-acid sequence, 505 residues long: Glutamate--tRNA ligase (505 aa).

The short motif at 12-22 (PSPTGDPHVGT) is the 'HIGH' region element. The 'KMSKS' region motif lies at 253 to 257 (KLSKR). Lys-256 is a binding site for ATP.

Belongs to the class-I aminoacyl-tRNA synthetase family. Glutamate--tRNA ligase type 1 subfamily. In terms of assembly, monomer.

It localises to the cytoplasm. The enzyme catalyses tRNA(Glu) + L-glutamate + ATP = L-glutamyl-tRNA(Glu) + AMP + diphosphate. In terms of biological role, catalyzes the attachment of glutamate to tRNA(Glu) in a two-step reaction: glutamate is first activated by ATP to form Glu-AMP and then transferred to the acceptor end of tRNA(Glu). The sequence is that of Glutamate--tRNA ligase from Chlamydia pneumoniae (Chlamydophila pneumoniae).